A 344-amino-acid polypeptide reads, in one-letter code: Fructose-bisphosphate aldolase (344 aa).

Residue S53 coordinates D-glyceraldehyde 3-phosphate. D95 (proton donor) is an active-site residue. Zn(2+)-binding residues include H96, D131, E161, and H212. G213 contacts dihydroxyacetone phosphate. H252 serves as a coordination point for Zn(2+). Residues 253–255 (GGS) and 274–277 (NVDT) each bind dihydroxyacetone phosphate.

It belongs to the class II fructose-bisphosphate aldolase family. Zn(2+) is required as a cofactor.

The catalysed reaction is beta-D-fructose 1,6-bisphosphate = D-glyceraldehyde 3-phosphate + dihydroxyacetone phosphate. It functions in the pathway carbohydrate degradation; glycolysis; D-glyceraldehyde 3-phosphate and glycerone phosphate from D-glucose: step 4/4. In terms of biological role, catalyzes the aldol condensation of dihydroxyacetone phosphate (DHAP or glycerone-phosphate) with glyceraldehyde 3-phosphate (G3P) to form fructose 1,6-bisphosphate (FBP) in gluconeogenesis and the reverse reaction in glycolysis. This chain is Fructose-bisphosphate aldolase (fba), found in Corynebacterium glutamicum (strain ATCC 13032 / DSM 20300 / JCM 1318 / BCRC 11384 / CCUG 27702 / LMG 3730 / NBRC 12168 / NCIMB 10025 / NRRL B-2784 / 534).